Reading from the N-terminus, the 501-residue chain is Aspartyl/glutamyl-tRNA(Asn/Gln) amidotransferase subunit B (501 aa).

The protein belongs to the GatB/GatE family. GatB subfamily. As to quaternary structure, heterotrimer of A, B and C subunits.

It catalyses the reaction L-glutamyl-tRNA(Gln) + L-glutamine + ATP + H2O = L-glutaminyl-tRNA(Gln) + L-glutamate + ADP + phosphate + H(+). The enzyme catalyses L-aspartyl-tRNA(Asn) + L-glutamine + ATP + H2O = L-asparaginyl-tRNA(Asn) + L-glutamate + ADP + phosphate + 2 H(+). Functionally, allows the formation of correctly charged Asn-tRNA(Asn) or Gln-tRNA(Gln) through the transamidation of misacylated Asp-tRNA(Asn) or Glu-tRNA(Gln) in organisms which lack either or both of asparaginyl-tRNA or glutaminyl-tRNA synthetases. The reaction takes place in the presence of glutamine and ATP through an activated phospho-Asp-tRNA(Asn) or phospho-Glu-tRNA(Gln). This Agrobacterium fabrum (strain C58 / ATCC 33970) (Agrobacterium tumefaciens (strain C58)) protein is Aspartyl/glutamyl-tRNA(Asn/Gln) amidotransferase subunit B.